The following is an 877-amino-acid chain: Phosphoenolpyruvate carboxylase (877 aa).

Residues H138 and K543 contribute to the active site.

This sequence belongs to the PEPCase type 1 family. Requires Mg(2+) as cofactor.

The enzyme catalyses oxaloacetate + phosphate = phosphoenolpyruvate + hydrogencarbonate. Forms oxaloacetate, a four-carbon dicarboxylic acid source for the tricarboxylic acid cycle. In Aeromonas hydrophila subsp. hydrophila (strain ATCC 7966 / DSM 30187 / BCRC 13018 / CCUG 14551 / JCM 1027 / KCTC 2358 / NCIMB 9240 / NCTC 8049), this protein is Phosphoenolpyruvate carboxylase.